The following is a 395-amino-acid chain: Elongation factor Tu (395 aa).

Residues 6–205 (KPHINVGTIG…NALEKIDLPI (200 aa)) enclose the tr-type G domain. The tract at residues 15 to 22 (GHVDHGKT) is G1. Residue 15–22 (GHVDHGKT) coordinates GTP. Threonine 22 lines the Mg(2+) pocket. The tract at residues 59 to 63 (GITIS) is G2. The tract at residues 80–83 (DCPG) is G3. GTP-binding positions include 80–84 (DCPGH) and 135–138 (NKCD). The tract at residues 135–138 (NKCD) is G4. The interval 173 to 175 (SAV) is G5.

The protein belongs to the TRAFAC class translation factor GTPase superfamily. Classic translation factor GTPase family. EF-Tu/EF-1A subfamily. As to quaternary structure, monomer.

It is found in the cytoplasm. The catalysed reaction is GTP + H2O = GDP + phosphate + H(+). In terms of biological role, GTP hydrolase that promotes the GTP-dependent binding of aminoacyl-tRNA to the A-site of ribosomes during protein biosynthesis. The chain is Elongation factor Tu from Ehrlichia ruminantium (strain Gardel).